The sequence spans 377 residues: Probable aspartic-type endopeptidase CTSD (377 aa).

The Peptidase A1 domain maps to 1 to 292; that stretch reads SLIDTGASRT…DFDKNRVGLA (292 aa). Residue Asp4 is part of the active site. Residue Asn58 is glycosylated (N-linked (GlcNAc...) asparagine). Asp186 is an active-site residue. The disordered stretch occupies residues 296 to 351; that stretch reads YGETKDPPSSSHPPPAPTSNKASGGSPGLPEQSGTSSATTSTTGEPSSGSTASPSA. The segment covering 328-351 has biased composition (low complexity); the sequence is SGTSSATTSTTGEPSSGSTASPSA. Ser350 is lipidated: GPI-anchor amidated serine. Residues 351–377 constitute a propeptide, removed in mature form; sequence AASSVSMSAWLSLAVFLSTASSLILWD.

This sequence belongs to the peptidase A1 family.

It is found in the cell membrane. Functionally, secreted aspartic-type endopeptidase which is secreted and contributes to virulence. This chain is Probable aspartic-type endopeptidase CTSD (CTSD), found in Arthroderma otae (strain ATCC MYA-4605 / CBS 113480) (Microsporum canis).